The following is a 418-amino-acid chain: Hydroxysteroid dehydrogenase-like protein 2 (418 aa).

Residues 17–23 (GASRGIG), Lys-42, and Asp-74 contribute to the NADP(+) site. The residue at position 42 (Lys-42) is an N6-(2-hydroxyisobutyryl)lysine. An N6-acetyllysine modification is found at Lys-116. Tyr-168 serves as the catalytic Proton acceptor. Lys-172 is an NADP(+) binding site. Residues 306–415 (RSGAVEETFR…KLEKLMNQMN (110 aa)) enclose the SCP2 domain. Residue Lys-318 is modified to N6-succinyllysine.

This sequence belongs to the short-chain dehydrogenases/reductases (SDR) family.

It localises to the peroxisome. It is found in the mitochondrion. Has apparently no steroid dehydrogenase activity. Controls bile acid (BA) and lipid metabolism in response to nutritional cues. The sequence is that of Hydroxysteroid dehydrogenase-like protein 2 (HSDL2) from Bos taurus (Bovine).